Reading from the N-terminus, the 120-residue chain is NAD(P)H-quinone oxidoreductase subunit 3, chloroplastic (120 aa).

A run of 3 helical transmembrane segments spans residues 9-29 (IFWA…FISG), 64-84 (MFAL…PWAM), and 88-108 (VLGV…ILGL).

This sequence belongs to the complex I subunit 3 family. As to quaternary structure, NDH is composed of at least 16 different subunits, 5 of which are encoded in the nucleus.

It is found in the plastid. Its subcellular location is the chloroplast thylakoid membrane. It catalyses the reaction a plastoquinone + NADH + (n+1) H(+)(in) = a plastoquinol + NAD(+) + n H(+)(out). The catalysed reaction is a plastoquinone + NADPH + (n+1) H(+)(in) = a plastoquinol + NADP(+) + n H(+)(out). NDH shuttles electrons from NAD(P)H:plastoquinone, via FMN and iron-sulfur (Fe-S) centers, to quinones in the photosynthetic chain and possibly in a chloroplast respiratory chain. The immediate electron acceptor for the enzyme in this species is believed to be plastoquinone. Couples the redox reaction to proton translocation, and thus conserves the redox energy in a proton gradient. In Barbarea verna (Land cress), this protein is NAD(P)H-quinone oxidoreductase subunit 3, chloroplastic.